A 236-amino-acid polypeptide reads, in one-letter code: UPF0257 lipoprotein YnfC (236 aa).

The signal sequence occupies residues 1 to 16 (MKKPLLLTLLCMILAG). Cys-17 is lipidated: N-palmitoyl cysteine. A lipid anchor (S-diacylglycerol cysteine) is attached at Cys-17.

This sequence belongs to the UPF0257 family.

It localises to the cell membrane. The protein is UPF0257 lipoprotein YnfC of Salmonella dublin (strain CT_02021853).